We begin with the raw amino-acid sequence, 209 residues long: MAKLYFYYSAMNAGKTTTLLQSAHNYRERGMRTSILTPKLDHRAGSGVVASRIGLRADGQTFDRQTELLQLIERDIAAHGPLHCVLVDEAQFLSSAQVWQLSEVVDRLRIPVLCYGLRTDFRGELFEGSQFLLAWADELEEIKTICHSGSKATMTVRVDAQGHAVQDGPQVEIGGNERYVSVSRAEFKKIMRGEGRIDPLQIALPLPPA.

Residues 9–16 (SAMNAGKT) and 88–91 (DEAQ) each bind ATP. The active-site Proton acceptor is the Glu-89.

Belongs to the thymidine kinase family. Homotetramer.

Its subcellular location is the cytoplasm. The enzyme catalyses thymidine + ATP = dTMP + ADP + H(+). The chain is Thymidine kinase from Xanthomonas campestris pv. campestris (strain 8004).